Here is a 192-residue protein sequence, read N- to C-terminus: ATP synthase protein MI25 (192 aa).

Residues isoleucine 29–serine 49 traverse the membrane as a helical segment.

Belongs to the ATPase protein MI25 family. In terms of assembly, F-type ATPases have 2 components, CF(1) - the catalytic core - and CF(0) - the membrane proton channel. CF(1) has five subunits: alpha(3), beta(3), gamma(1), delta(1), epsilon(1). CF(0) has three main subunits: a, b and c.

It is found in the mitochondrion membrane. In terms of biological role, this is one of the chains of the nonenzymatic component (CF(0) subunit) of the mitochondrial ATPase complex. The protein is ATP synthase protein MI25 (ATP4) of Arabidopsis thaliana (Mouse-ear cress).